The following is a 275-amino-acid chain: Large ribosomal subunit protein uL2 (275 aa).

Disordered stretches follow at residues 35 to 55 (EKQTRSSGRNNQGRVTTRHKG) and 223 to 260 (VAMNPVDHPHGGGEGRTSGGRHPVSPWGIPTKGYKTRN). The segment covering 39 to 49 (RSSGRNNQGRV) has biased composition (polar residues).

Belongs to the universal ribosomal protein uL2 family. As to quaternary structure, part of the 50S ribosomal subunit. Forms a bridge to the 30S subunit in the 70S ribosome.

One of the primary rRNA binding proteins. Required for association of the 30S and 50S subunits to form the 70S ribosome, for tRNA binding and peptide bond formation. It has been suggested to have peptidyltransferase activity; this is somewhat controversial. Makes several contacts with the 16S rRNA in the 70S ribosome. The protein is Large ribosomal subunit protein uL2 of Methylococcus capsulatus (strain ATCC 33009 / NCIMB 11132 / Bath).